Here is a 55-residue protein sequence, read N- to C-terminus: Ribosome modulation factor (55 aa).

It belongs to the ribosome modulation factor family. Associates exclusively with 100S ribosomes.

It is found in the cytoplasm. Its function is as follows. During stationary phase, converts 70S ribosomes to an inactive dimeric form (100S ribosomes). May form immature 90S particles, which are converted to mature 100S ribosomes by the hibernation promoting factor Hpf. The chain is Ribosome modulation factor from Escherichia coli O157:H7.